The chain runs to 344 residues: Follistatin (344 aa).

The signal sequence occupies residues 1 to 29 (MARPRHQPGGLCLLLLLLCQFMEDRSAQA). A TB domain is found at 30–103 (GNCWLRQAKN…TCENVDCGPG (74 aa)). Intrachain disulfides connect Cys-32–Cys-55, Cys-42–Cys-88, Cys-56–Cys-91, Cys-95–Cys-106, Cys-100–Cys-116, Cys-118–Cys-150, Cys-122–Cys-143, and Cys-132–Cys-164. A Follistatin-like 1 domain is found at 94-117 (TCENVDCGPGKKCRMNKKNKPRCV). Kazal-like domains lie at 112–166 (NKPR…KCKK), 186–241 (NAYC…KCIK), and 261–318 (KVGR…SCNS). A glycan (N-linked (GlcNAc...) asparagine) is linked at Asn-124. The region spanning 167–190 (TCRDVFCPGSSTCVVDQTNNAYCV) is the Follistatin-like 2 domain. Intrachain disulfides connect Cys-192–Cys-225, Cys-196–Cys-218, and Cys-207–Cys-239. Residues 244 to 268 (SCDDIQCTGGKKCLWDFKVGRGRCS) form the Follistatin-like 3 domain. 3 cysteine pairs are disulfide-bonded: Cys-270-Cys-302, Cys-274-Cys-295, and Cys-284-Cys-316. An N-linked (GlcNAc...) asparagine glycan is attached at Asn-288. Residues 316–344 (CNSISEDTEDEEEDEDQDYSFPISSILEW) form a disordered region. Residues 321-333 (EDTEDEEEDEDQD) show a composition bias toward acidic residues.

Interacts with GDF11. Interacts with activin A/INHBA. Interacts with myostatin/MSTN.

It localises to the secreted. It is found in the nucleus. The protein resides in the nucleolus. In terms of biological role, multifunctional regulatory protein whose primary function is to antagonize members of the transforming growth factor beta (TGF-beta) superfamily including activin, myostatin, GDF11 or bone morphogenetic proteins (BMPs). Mechanistically, binds to these ligands in the extracellular space, blocking their type II receptor-binding site to inhibit downstream signaling. Plays an essential role in muscle fiber formation and growth both by preventing the repressive effects of myostatin and through SMAD3/AKT/mTOR signaling independently of myostatin. Also promotes neural differentiation by antagonizing the action BMP4. Acts as a specific inhibitor of the biosynthesis and secretion of pituitary follicle stimulating hormone (FSH) by sequestering activin A/INHBA. On the other hand, translocates into the nucleus where it down-regulates rRNA synthesis and ribosome biogenesis to maintain cellular energy homeostasis by binding to rDNA. In Bos taurus (Bovine), this protein is Follistatin.